We begin with the raw amino-acid sequence, 873 residues long: Zinc fingers and homeoboxes protein 1 (873 aa).

A disordered region spans residues 24-63; sequence LISDLDEGPPVLTPVENTRAESISSDEEVHESVDSDNQQN. At threonine 36 the chain carries Phosphothreonine. A phosphoserine mark is found at serine 45, serine 47, and serine 48. 2 C2H2-type zinc fingers span residues 70–93 and 102–125; these read YECK…DSEH and YVCV…LKYH. Residue lysine 159 forms a Glycyl lysine isopeptide (Lys-Gly) (interchain with G-Cter in SUMO2) linkage. A disordered region spans residues 198-236; the sequence is VHHNSVEDVPEEKENEIKPDREETVENPSSSASESNTST. At serine 202 the chain carries Phosphoserine. The segment covering 212-221 has biased composition (basic and acidic residues); it reads NEIKPDREET. Residues 223–236 are compositionally biased toward low complexity; the sequence is ENPSSSASESNTST. Positions 272-432 are required for dimerization; sequence NSNLIPKVLI…QNNVQKSQVP (161 aa). A required for interaction with NFYA region spans residues 272 to 564; the sequence is NSNLIPKVLI…VQPKQSWNPF (293 aa). The homeobox 1 DNA-binding region spans 284 to 346; it reads NSIPTYNAAL…LKHGVSWTPE (63 aa). A disordered region spans residues 431 to 454; the sequence is VPAAQPTAETKPATAAVPTSQSVK. Residues lysine 441, lysine 454, and lysine 485 each participate in a glycyl lysine isopeptide (Lys-Gly) (interchain with G-Cter in SUMO2) cross-link. A DNA-binding region (homeobox 2) is located at residues 464–526; that stretch reads SFGIRAKKTK…YNQRNSKSNQ (63 aa). 3 disordered regions span residues 544-563, 626-668, and 732-769; these read DETT…SWNP, KEEK…CKKT, and SSMN…INNW. Polar residues predominate over residues 550-562; it reads PTVGTVQPKQSWN. Positions 569–630 form a DNA-binding region, homeobox 3; that stretch reads PQKFKEKTAE…KSKALKEEKM (62 aa). Lysine 629 participates in a covalent cross-link: Glycyl lysine isopeptide (Lys-Gly) (interchain with G-Cter in SUMO2). At serine 648 the chain carries Phosphoserine. The homeobox 4 DNA-binding region spans 660–722; it reads STGKICKKTP…YAWKNGNLKW (63 aa). The interval 734–768 is required for nuclear localization; it reads MNGLSSLRKRGRGRPKGRGRGRPRGRPRGSKRINN. The span at 740 to 764 shows a compositional bias: basic residues; that stretch reads LRKRGRGRPKGRGRGRPRGRPRGSK. The residue at position 774 (serine 774) is a Phosphoserine. A DNA-binding region (homeobox 5) is located at residues 777–832; sequence KFKTGTAILKDYYLKHKFLNEQDLDELVNKSHMGYEQVREWFAERQRRSELGIELF. A disordered region spans residues 829–873; that stretch reads IELFEENEEEDEVIDDQEEDEEETDDSDTWEPPRHVKRKLSKSDD. The segment covering 831 to 857 has biased composition (acidic residues); sequence LFEENEEEDEVIDDQEEDEEETDDSDT. The required for repressor activity stretch occupies residues 831–873; that stretch reads LFEENEEEDEVIDDQEEDEEETDDSDTWEPPRHVKRKLSKSDD. Positions 863–873 are enriched in basic residues; that stretch reads HVKRKLSKSDD.

It belongs to the ZHX family. As to quaternary structure, forms homodimers. Heterodimer (via HD1 domain) with ZHX2 (via HD1 domain). Also forms a heterodimer with ZHX3 which is a prerequisite for repressor activity. Interacts with ATF7IP and NFYA. Interacts (via homeobox domains) with DNMT3B (via PWWP domain).

Its subcellular location is the nucleus. Acts as a transcriptional repressor. Increases DNMT3B-mediated repressive transcriptional activity when DNMT3B is tethered to DNA. May link molecule between DNMT3B and other co-repressor proteins. This Pongo pygmaeus (Bornean orangutan) protein is Zinc fingers and homeoboxes protein 1 (ZHX1).